The sequence spans 115 residues: NAD(P)H-quinone oxidoreductase subunit M (115 aa).

Belongs to the complex I NdhM subunit family. NDH-1 can be composed of about 15 different subunits; different subcomplexes with different compositions have been identified which probably have different functions.

It localises to the cellular thylakoid membrane. The enzyme catalyses a plastoquinone + NADH + (n+1) H(+)(in) = a plastoquinol + NAD(+) + n H(+)(out). It catalyses the reaction a plastoquinone + NADPH + (n+1) H(+)(in) = a plastoquinol + NADP(+) + n H(+)(out). Functionally, NDH-1 shuttles electrons from an unknown electron donor, via FMN and iron-sulfur (Fe-S) centers, to quinones in the respiratory and/or the photosynthetic chain. The immediate electron acceptor for the enzyme in this species is believed to be plastoquinone. Couples the redox reaction to proton translocation, and thus conserves the redox energy in a proton gradient. Cyanobacterial NDH-1 also plays a role in inorganic carbon-concentration. The protein is NAD(P)H-quinone oxidoreductase subunit M of Prochlorococcus marinus (strain MIT 9215).